The primary structure comprises 203 residues: Chromophore lyase CpcT/CpeT 3 (203 aa).

It belongs to the CpcT/CpeT biliprotein lyase family.

Functionally, covalently attaches a chromophore to Cys residue(s) of phycobiliproteins. This is Chromophore lyase CpcT/CpeT 3 from Gloeobacter violaceus (strain ATCC 29082 / PCC 7421).